A 710-amino-acid polypeptide reads, in one-letter code: Choline transporter-like protein 2 (710 aa).

Topologically, residues 1–34 (MEDDGKSPPDSAYGEPKKYDPNFKGPIQNRGCTD) are cytoplasmic. The helical transmembrane segment at 35–55 (ILCCILIVLGIIAYVAVGIVA) threads the bilayer. Over 56–236 (WTYGDPRKVI…KIFEDYTVSW (181 aa)) the chain is Extracellular. N-linked (GlcNAc...) asparagine glycosylation is found at asparagine 147, asparagine 190, and asparagine 204. A helical transmembrane segment spans residues 237 to 257 (YWIIIGLIIAMVISLIFVVLL). Residues 258–260 (RFL) lie on the Cytoplasmic side of the membrane. A helical membrane pass occupies residues 261–281 (AGIMVWVMIVLVIAVMGYGIF). The Extracellular portion of the chain corresponds to 282–319 (HCYMEYARLKGQSGSDVTLKDIGFQTDIRVYLHLRQTW). The chain crosses the membrane as a helical span at residues 320–340 (LAFMIILCILEVIVILLLIFL). At 341 to 368 (RKRIMIAIALIKEASRAVGFVMSSLVFP) the chain is on the cytoplasmic side. Residues 369 to 389 (LFTFLLVCLCIAYWAITAVFL) form a helical membrane-spanning segment. The Extracellular segment spans residues 390–458 (STSNEAVYKV…FQIYNAFMFL (69 aa)). N-linked (GlcNAc...) asparagine glycans are attached at residues asparagine 401, asparagine 418, and asparagine 421. A helical transmembrane segment spans residues 459–481 (WLANFVIALGQVTLAGAFASYYW). At 482–508 (AFKKPDDMPAFPIFSSLGRALRYHTGS) the chain is on the cytoplasmic side. The chain crosses the membrane as a helical span at residues 509-529 (LAFGSLILAIVQMIRILLEYL). Topologically, residues 530 to 567 (DHKLKGADNKCARFLLCCLKCCFWCLEKFIKFLNRNAY) are extracellular. A helical membrane pass occupies residues 568 to 588 (IMIAIYGTNFCTSARNAFFLL). The Cytoplasmic segment spans residues 589–603 (MRNIIRVAVLDKVTD). A helical transmembrane segment spans residues 604–624 (FLLFLGKLLVVGCVGILAFFF). The Extracellular segment spans residues 625 to 642 (FSRRIQIVQDTAPTLNYY). Residues 643-663 (WVPILTVILGSYLIAHGFFSV) traverse the membrane as a helical segment. The Cytoplasmic portion of the chain corresponds to 664-710 (YGMCVDTLFLCFLEDLERNDGSTERPYFMSGSLQKLLNKSNQTKPDK).

This sequence belongs to the CTL (choline transporter-like) family.

Its subcellular location is the cell membrane. It is found in the mitochondrion outer membrane. The catalysed reaction is choline(out) + n H(+)(in) = choline(in) + n H(+)(out). It catalyses the reaction ethanolamine(out) + n H(+)(in) = ethanolamine(in) + n H(+)(out). Choline/H+ antiporter, mainly in mitochodria. Also acts as a low-affinity ethanolamine/H+ antiporter, regulating the supply of extracellular ethanolamine (Etn) for the CDP-Etn pathway, redistribute intracellular Etn and balance the CDP-Cho and CDP-Etn arms of the Kennedy pathway. The chain is Choline transporter-like protein 2 (slc44a2) from Xenopus laevis (African clawed frog).